We begin with the raw amino-acid sequence, 440 residues long: 3-phosphoshikimate 1-carboxyvinyltransferase (440 aa).

Residues K26, S27, and R31 each contribute to the 3-phosphoshikimate site. K26 is a binding site for phosphoenolpyruvate. Residues G99 and R127 each contribute to the phosphoenolpyruvate site. 4 residues coordinate 3-phosphoshikimate: S172, Q174, D320, and K347. Q174 is a phosphoenolpyruvate binding site. The active-site Proton acceptor is the D320. Residues R351 and R392 each coordinate phosphoenolpyruvate.

The protein belongs to the EPSP synthase family. As to quaternary structure, monomer.

The protein resides in the cytoplasm. The enzyme catalyses 3-phosphoshikimate + phosphoenolpyruvate = 5-O-(1-carboxyvinyl)-3-phosphoshikimate + phosphate. The protein operates within metabolic intermediate biosynthesis; chorismate biosynthesis; chorismate from D-erythrose 4-phosphate and phosphoenolpyruvate: step 6/7. Functionally, catalyzes the transfer of the enolpyruvyl moiety of phosphoenolpyruvate (PEP) to the 5-hydroxyl of shikimate-3-phosphate (S3P) to produce enolpyruvyl shikimate-3-phosphate and inorganic phosphate. The polypeptide is 3-phosphoshikimate 1-carboxyvinyltransferase (Xanthomonas euvesicatoria pv. vesicatoria (strain 85-10) (Xanthomonas campestris pv. vesicatoria)).